Here is an 825-residue protein sequence, read N- to C-terminus: Probable inorganic carbon transporter subunit DabA (825 aa).

Zn(2+)-binding residues include Cys334, Asp336, His521, and Cys536.

This sequence belongs to the inorganic carbon transporter (TC 9.A.2) DabA family. As to quaternary structure, forms a complex with DabB. Requires Zn(2+) as cofactor.

It localises to the cell inner membrane. In terms of biological role, part of an energy-coupled inorganic carbon pump. In Acidithiobacillus ferrooxidans (strain ATCC 53993 / BNL-5-31) (Leptospirillum ferrooxidans (ATCC 53993)), this protein is Probable inorganic carbon transporter subunit DabA.